A 162-amino-acid polypeptide reads, in one-letter code: Caveolin-2 (162 aa).

The Cytoplasmic portion of the chain corresponds to 1-86 (MGLETEKADV…FEISKYVIYK (86 aa)). Tyrosine 19 is modified (phosphotyrosine; by SRC). 2 positions are modified to phosphoserine: serine 20 and serine 23. Tyrosine 27 carries the phosphotyrosine; by SRC modification. Phosphoserine is present on serine 36. The helical intramembrane region spans 87–107 (FLTLFLAIPLAFAAGILFATL). Residues 108-162 (SCLHIWIIMPFVKTCLMVLPSVQTIWKSITDVVIAPLCTSVGRSFSSVSLQLSHD) are Cytoplasmic-facing.

This sequence belongs to the caveolin family. In terms of assembly, monomer or homodimer. Interacts with CAV1; the interaction forms a stable heterooligomeric complex that is required for targeting to lipid rafts and for caveolae formation. Tyrosine phosphorylated forms do not form heterooligomers with the Tyr-19-phosphorylated form existing as a monomer or dimer, and the Tyr-27-form as a monomer only. Interacts (tyrosine phosphorylated form) with the SH2 domain-containing proteins, RASA1, NCK1 and SRC. Interacts (tyrosine phosphorylated form) with INSR, the interaction (Tyr-27-phosphorylated form) is increased on insulin stimulation. Interacts (Tyr-19 phosphorylated form) with MAPK1 (phosphorylated form); the interaction, promoted by insulin, leads to nuclear location and MAPK1 activation. Interacts with STAT3; the interaction is increased on insulin-induced tyrosine phosphorylation leading to STAT activation. Phosphorylated on serine and tyrosine residues. CAV1 promotes phosphorylation on Ser-23 which then targets the complex to the plasma membrane, lipid rafts and caveolae. Phosphorylation on Ser-36 appears to modulate mitosis in endothelial cells. Phosphorylation on both Tyr-19 and Tyr-27 is required for insulin-induced 'Ser-727' phosphorylation of STAT3 and its activation. Phosphorylation on Tyr-19 is required for insulin-induced phosphorylation of MAPK1 and DNA binding of STAT3. Tyrosine phosphorylation is induced by both EGF and insulin (By. similarity).

The protein localises to the nucleus. The protein resides in the cytoplasm. Its subcellular location is the golgi apparatus membrane. It localises to the cell membrane. It is found in the membrane. The protein localises to the caveola. Functionally, may act as a scaffolding protein within caveolar membranes. Interacts directly with G-protein alpha subunits and can functionally regulate their activity. Acts as an accessory protein in conjunction with CAV1 in targeting to lipid rafts and driving caveolae formation. The Ser-36 phosphorylated form has a role in modulating mitosis in endothelial cells. Positive regulator of cellular mitogenesis of the MAPK signaling pathway. Required for the insulin-stimulated nuclear translocation and activation of MAPK1 and STAT3, and the subsequent regulation of cell cycle progression. This Neofelis nebulosa (Clouded leopard) protein is Caveolin-2 (CAV2).